Reading from the N-terminus, the 119-residue chain is C-X-C motif chemokine 17 (119 aa).

The signal sequence occupies residues 1-22; the sequence is MKLLASPFLLLLPVMLMSMVFS. The segment at 75–100 is disordered; sequence CPCDHVKGREKKNRHQKHHRKSQRPS. Disulfide bonds link cysteine 75–cysteine 103 and cysteine 77–cysteine 110. Basic residues predominate over residues 82 to 98; it reads GREKKNRHQKHHRKSQR.

The protein belongs to the intercrine alpha (chemokine CxC) family. Likely to undergo an endoproteolytic process to form a four-cysteine-containing mature peptide with a canonical CXC chemokine scaffold after secretion. Detected in lung, trachea, lung, tongue thyroid, submaxillary gland, epididymis, and uterus tissues and at a lower level in ovary, prostate and in intestinal tissues.

Its subcellular location is the secreted. Functionally, chemokine that acts as a chemoattractant for monocytes, macrophages and dendritic cells. Plays a role in angiogenesis and possibly in the development of tumors. Acts as an anti-inflammatory in the stomach. May play a role in the innate defense against infections. Activates the C-X-C chemokine receptor GPR35 to induce a rapid and transient rise in the level of intracellular calcium ions. The chain is C-X-C motif chemokine 17 (Cxcl17) from Mus musculus (Mouse).